Here is an 81-residue protein sequence, read N- to C-terminus: Protein Vpu (81 aa).

Residues 1–7 are Extracellular-facing; the sequence is MSYLLAI. The chain crosses the membrane as a helical span at residues 8–28; the sequence is GIAALIVALIIAIVVWTIVYI. The Cytoplasmic portion of the chain corresponds to 29–81; that stretch reads EYKKLVRQRKINKLYKRIRERAEDSGNESEGDAEELAALGEMGPFIPGDINNL. S53 and S57 each carry phosphoserine; by host CK2.

The protein belongs to the HIV-1 VPU protein family. Homopentamer. Interacts with host CD4 and BRTC; these interactions induce proteasomal degradation of CD4. Interacts with host BST2; this interaction leads to the degradation of host BST2. Interacts with host FBXW11. Interacts with host AP1M1; this interaction plays a role in the mistrafficking and subsequent degradation of host BST2. Interacts with host RANBP2; this interaction allows Vpu to down-regulate host BLM sumoylation. In terms of processing, phosphorylated by host CK2. This phosphorylation is necessary for interaction with human BTRC and degradation of CD4.

It localises to the host membrane. With respect to regulation, ion channel activity is inhibited by hexamethylene amiloride in vitro. Functionally, enhances virion budding by targeting host CD4 and Tetherin/BST2 to proteasome degradation. Degradation of CD4 prevents any unwanted premature interactions between viral Env and its host receptor CD4 in the endoplasmic reticulum. Degradation of antiretroviral protein Tetherin/BST2 is important for virion budding, as BST2 tethers new viral particles to the host cell membrane. Mechanistically, Vpu bridges either CD4 or BST2 to BTRC, a substrate recognition subunit of the Skp1/Cullin/F-box protein E3 ubiquitin ligase, induces their ubiquitination and subsequent proteasomal degradation. The alteration of the E3 ligase specificity by Vpu seems to promote the degradation of host IKBKB, leading to NF-kappa-B down-regulation and subsequent apoptosis. Acts as a viroporin that forms an oligomeric ion channel in membranes. Modulates the host DNA repair mechanisms to promote degradation of nuclear viral cDNA in cells that are already productively infected in order to suppress immune sensing and proviral hyper-integration (superinfection). Manipulates PML-NBs and modulates SUMOylation of host BLM protein thereby enhancing its DNA-end processing activity toward viral unintegrated linear DNA. Also inhibits RAD52-mediated homologous repair of viral cDNA, preventing the generation of dead-end circular forms of single copies of the long terminal repeat and permitting sustained nucleolytic attack. This is Protein Vpu from Homo sapiens (Human).